Reading from the N-terminus, the 417-residue chain is Putative competence-damage inducible protein (417 aa).

The protein belongs to the CinA family.

This is Putative competence-damage inducible protein from Oceanobacillus iheyensis (strain DSM 14371 / CIP 107618 / JCM 11309 / KCTC 3954 / HTE831).